The primary structure comprises 365 residues: Sulfate/thiosulfate import ATP-binding protein CysA (365 aa).

One can recognise an ABC transporter domain in the interval 3-237; that stretch reads IEIANIKKSF…PATRFVLEFM (235 aa). 35–42 serves as a coordination point for ATP; it reads GPSGSGKT.

It belongs to the ABC transporter superfamily. Sulfate/tungstate importer (TC 3.A.1.6) family. The complex is composed of two ATP-binding proteins (CysA), two transmembrane proteins (CysT and CysW) and a solute-binding protein (CysP).

The protein localises to the cell inner membrane. The catalysed reaction is sulfate(out) + ATP + H2O = sulfate(in) + ADP + phosphate + H(+). It catalyses the reaction thiosulfate(out) + ATP + H2O = thiosulfate(in) + ADP + phosphate + H(+). Part of the ABC transporter complex CysAWTP involved in sulfate/thiosulfate import. Responsible for energy coupling to the transport system. This is Sulfate/thiosulfate import ATP-binding protein CysA from Escherichia coli O157:H7.